The chain runs to 572 residues: Probable inactive glycosyltransferase 25 family member 3 (572 aa).

Asn52, Asn130, Asn214, and Asn337 each carry an N-linked (GlcNAc...) asparagine glycan. The Prevents secretion from ER motif lies at 569 to 572; the sequence is RDEL.

Belongs to the glycosyltransferase 25 family.

Its subcellular location is the endoplasmic reticulum lumen. Probable cell adhesion protein involved in leukocyte transmigration across the blood-brain barrier. Does not express any beta-galactosyltransferase activity in vitro. The protein is Probable inactive glycosyltransferase 25 family member 3 (Cercam) of Rattus norvegicus (Rat).